The chain runs to 215 residues: Pyrrolidone-carboxylate peptidase (215 aa).

Active-site residues include Glu-81, Cys-144, and His-168.

This sequence belongs to the peptidase C15 family. As to quaternary structure, homotetramer.

Its subcellular location is the cytoplasm. The enzyme catalyses Release of an N-terminal pyroglutamyl group from a polypeptide, the second amino acid generally not being Pro.. Its function is as follows. Removes 5-oxoproline from various penultimate amino acid residues except L-proline. This is Pyrrolidone-carboxylate peptidase (pcp) from Bacillus amyloliquefaciens (Bacillus velezensis).